A 419-amino-acid polypeptide reads, in one-letter code: Histidine--tRNA ligase (419 aa).

This sequence belongs to the class-II aminoacyl-tRNA synthetase family. In terms of assembly, homodimer.

Its subcellular location is the cytoplasm. The enzyme catalyses tRNA(His) + L-histidine + ATP = L-histidyl-tRNA(His) + AMP + diphosphate + H(+). The protein is Histidine--tRNA ligase of Halothermothrix orenii (strain H 168 / OCM 544 / DSM 9562).